The primary structure comprises 235 residues: Phosphoribosylaminoimidazole-succinocarboxamide synthase (235 aa).

It belongs to the SAICAR synthetase family.

The catalysed reaction is 5-amino-1-(5-phospho-D-ribosyl)imidazole-4-carboxylate + L-aspartate + ATP = (2S)-2-[5-amino-1-(5-phospho-beta-D-ribosyl)imidazole-4-carboxamido]succinate + ADP + phosphate + 2 H(+). Its pathway is purine metabolism; IMP biosynthesis via de novo pathway; 5-amino-1-(5-phospho-D-ribosyl)imidazole-4-carboxamide from 5-amino-1-(5-phospho-D-ribosyl)imidazole-4-carboxylate: step 1/2. This is Phosphoribosylaminoimidazole-succinocarboxamide synthase from Streptococcus sanguinis (strain SK36).